Reading from the N-terminus, the 709-residue chain is Fatty acid oxidation complex subunit alpha (709 aa).

Residues 1-188 (MEKTFNLTRR…KMGLVNDVVP (188 aa)) are enoyl-CoA hydratase. A 3-hydroxyacyl-CoA dehydrogenase region spans residues 308 to 709 (RKVKKAVILG…EMAAEKTRFF (402 aa)).

The protein in the N-terminal section; belongs to the enoyl-CoA hydratase/isomerase family. In the central section; belongs to the 3-hydroxyacyl-CoA dehydrogenase family. As to quaternary structure, heterotetramer of two alpha chains (FadJ) and two beta chains (FadI).

It is found in the cytoplasm. It catalyses the reaction a (3S)-3-hydroxyacyl-CoA = a (2E)-enoyl-CoA + H2O. The enzyme catalyses a 4-saturated-(3S)-3-hydroxyacyl-CoA = a (3E)-enoyl-CoA + H2O. The catalysed reaction is a (3S)-3-hydroxyacyl-CoA + NAD(+) = a 3-oxoacyl-CoA + NADH + H(+). It carries out the reaction (3S)-3-hydroxybutanoyl-CoA = (3R)-3-hydroxybutanoyl-CoA. It participates in lipid metabolism; fatty acid beta-oxidation. In terms of biological role, catalyzes the formation of a hydroxyacyl-CoA by addition of water on enoyl-CoA. Also exhibits 3-hydroxyacyl-CoA epimerase and 3-hydroxyacyl-CoA dehydrogenase activities. This Shewanella sp. (strain MR-7) protein is Fatty acid oxidation complex subunit alpha.